Reading from the N-terminus, the 218-residue chain is Ras-related protein Rab11E (218 aa).

GTP is bound at residue 20–27 (GDSGVGKS). The Effector region signature appears at 42-50 (SKSTIGVEF). Residues 68-72 (DTAGQ) and 126-129 (NKSD) each bind GTP. 2 S-geranylgeranyl cysteine lipidation sites follow: cysteine 215 and cysteine 216.

It belongs to the small GTPase superfamily. Rab family.

It is found in the cell membrane. This Lotus japonicus (Lotus corniculatus var. japonicus) protein is Ras-related protein Rab11E (RAB11E).